The primary structure comprises 520 residues: Cytochrome P450 monooxygenase 176 (520 aa).

N-linked (GlcNAc...) asparagine glycosylation is present at N6. Residues 10-27 traverse the membrane as a helical segment; that stretch reads LLVVAGALFLTFLTTRFI. N-linked (GlcNAc...) asparagine glycans are attached at residues N141 and N270. Heme is bound at residue C445. N-linked (GlcNAc...) asparagine glycosylation is present at N517.

This sequence belongs to the cytochrome P450 family. It depends on heme as a cofactor.

The protein localises to the membrane. The protein operates within secondary metabolite biosynthesis. Cytochrome P450 monooxygenase that is able to use delta(6)-protoilludene as a substrate to produce delta(6)-protoilludene-5-ol and an unidentified hydroxyprotoilludene. Is also able to use phenanthrene as a substrate for oxidation. The protein is Cytochrome P450 monooxygenase 176 of Postia placenta (strain ATCC 44394 / Madison 698-R) (Brown rot fungus).